Consider the following 156-residue polypeptide: ATP synthase subunit b (156 aa).

Residues 7 to 27 (LFLQAVVFAILVWFTMKFVWP) form a helical membrane-spanning segment.

This sequence belongs to the ATPase B chain family. In terms of assembly, F-type ATPases have 2 components, F(1) - the catalytic core - and F(0) - the membrane proton channel. F(1) has five subunits: alpha(3), beta(3), gamma(1), delta(1), epsilon(1). F(0) has three main subunits: a(1), b(2) and c(10-14). The alpha and beta chains form an alternating ring which encloses part of the gamma chain. F(1) is attached to F(0) by a central stalk formed by the gamma and epsilon chains, while a peripheral stalk is formed by the delta and b chains.

It is found in the cell inner membrane. F(1)F(0) ATP synthase produces ATP from ADP in the presence of a proton or sodium gradient. F-type ATPases consist of two structural domains, F(1) containing the extramembraneous catalytic core and F(0) containing the membrane proton channel, linked together by a central stalk and a peripheral stalk. During catalysis, ATP synthesis in the catalytic domain of F(1) is coupled via a rotary mechanism of the central stalk subunits to proton translocation. Functionally, component of the F(0) channel, it forms part of the peripheral stalk, linking F(1) to F(0). This Polaromonas naphthalenivorans (strain CJ2) protein is ATP synthase subunit b.